Here is a 287-residue protein sequence, read N- to C-terminus: Glycine--tRNA ligase alpha subunit (287 aa).

This sequence belongs to the class-II aminoacyl-tRNA synthetase family. In terms of assembly, tetramer of two alpha and two beta subunits.

The protein resides in the cytoplasm. The enzyme catalyses tRNA(Gly) + glycine + ATP = glycyl-tRNA(Gly) + AMP + diphosphate. This is Glycine--tRNA ligase alpha subunit from Campylobacter jejuni (strain RM1221).